The following is an 84-amino-acid chain: Large ribosomal subunit protein bL27 (84 aa).

The disordered stretch occupies residues 1-21; sequence MAHKKGGGSTKNGRDSNPKYL.

Belongs to the bacterial ribosomal protein bL27 family.

The polypeptide is Large ribosomal subunit protein bL27 (Pelodictyon phaeoclathratiforme (strain DSM 5477 / BU-1)).